The following is a 485-amino-acid chain: Cytochrome P450 monooxygenase tndB (485 aa).

A helical membrane pass occupies residues 20–40; the sequence is VYGISAVIAVGLAIYSASLAI. A heme-binding site is contributed by C481.

The protein belongs to the cytochrome P450 family. It depends on heme as a cofactor.

The protein localises to the membrane. Its pathway is secondary metabolite biosynthesis; terpenoid biosynthesis. Functionally, cytochrome P450 monooxygenase; part of the gene cluster that mediates the biosynthesis of talaronoid C, a fusicoccane diterpenoid with an unprecedented tricyclic 5/8/6 ring system. The first step in the pathway is performed by the fusicoccadiene synthase tndC that possesses both prenyl transferase and terpene cyclase activity, converting isopentenyl diphosphate and dimethylallyl diphosphate into geranylgeranyl diphosphate (GGDP) and further converting GGDP into talarodiene, a precursor for talaronoid C. The remaining enzymes from the cluster include the cytochrome P450 monooxygenase tndB, the aldehyde reductase tndE and the alcohol dehydrogenase tndF that are involved in the conversion of talarodiene into talaronoid C. The protein is Cytochrome P450 monooxygenase tndB of Aspergillus flavipes.